Consider the following 259-residue polypeptide: Adenosylcobinamide-GDP ribazoletransferase (259 aa).

6 consecutive transmembrane segments (helical) span residues 37–57, 58–78, 118–138, 143–163, 195–215, and 237–257; these read ASRY…LVYS, VMLH…ASVL, ALAL…LALF, VSLA…SFIF, AAIS…LGLL, and LGAT…IVGA.

Belongs to the CobS family. It depends on Mg(2+) as a cofactor.

The protein resides in the cell inner membrane. The catalysed reaction is alpha-ribazole + adenosylcob(III)inamide-GDP = adenosylcob(III)alamin + GMP + H(+). It catalyses the reaction alpha-ribazole 5'-phosphate + adenosylcob(III)inamide-GDP = adenosylcob(III)alamin 5'-phosphate + GMP + H(+). The protein operates within cofactor biosynthesis; adenosylcobalamin biosynthesis; adenosylcobalamin from cob(II)yrinate a,c-diamide: step 7/7. Its function is as follows. Joins adenosylcobinamide-GDP and alpha-ribazole to generate adenosylcobalamin (Ado-cobalamin). Also synthesizes adenosylcobalamin 5'-phosphate from adenosylcobinamide-GDP and alpha-ribazole 5'-phosphate. In Shewanella piezotolerans (strain WP3 / JCM 13877), this protein is Adenosylcobinamide-GDP ribazoletransferase.